The following is a 464-amino-acid chain: Argininosuccinate lyase (464 aa).

It belongs to the lyase 1 family. Argininosuccinate lyase subfamily.

It localises to the cytoplasm. It carries out the reaction 2-(N(omega)-L-arginino)succinate = fumarate + L-arginine. Its pathway is amino-acid biosynthesis; L-arginine biosynthesis; L-arginine from L-ornithine and carbamoyl phosphate: step 3/3. This Pseudomonas paraeruginosa (strain DSM 24068 / PA7) (Pseudomonas aeruginosa (strain PA7)) protein is Argininosuccinate lyase.